Here is a 645-residue protein sequence, read N- to C-terminus: Acetyl-coenzyme A synthetase (645 aa).

CoA-binding positions include 190–193 and Thr-308; that span reads RGGK. Residues 384–386, 408–413, Asp-497, and Arg-512 contribute to the ATP site; these read GEP and DTWWQT. Ser-520 serves as a coordination point for CoA. Arg-523 provides a ligand contact to ATP. Positions 534, 536, and 539 each coordinate Mg(2+). At Lys-606 the chain carries N6-acetyllysine.

This sequence belongs to the ATP-dependent AMP-binding enzyme family. Requires Mg(2+) as cofactor. In terms of processing, acetylated. Deacetylation by the SIR2-homolog deacetylase activates the enzyme.

The catalysed reaction is acetate + ATP + CoA = acetyl-CoA + AMP + diphosphate. Catalyzes the conversion of acetate into acetyl-CoA (AcCoA), an essential intermediate at the junction of anabolic and catabolic pathways. AcsA undergoes a two-step reaction. In the first half reaction, AcsA combines acetate with ATP to form acetyl-adenylate (AcAMP) intermediate. In the second half reaction, it can then transfer the acetyl group from AcAMP to the sulfhydryl group of CoA, forming the product AcCoA. The chain is Acetyl-coenzyme A synthetase from Alcanivorax borkumensis (strain ATCC 700651 / DSM 11573 / NCIMB 13689 / SK2).